We begin with the raw amino-acid sequence, 529 residues long: Bifunctional purine biosynthesis protein PurH (529 aa).

Residues 1-148 (MEQSFLPIRC…KNYKYVTVVV (148 aa)) enclose the MGS-like domain.

Belongs to the PurH family.

The catalysed reaction is (6R)-10-formyltetrahydrofolate + 5-amino-1-(5-phospho-beta-D-ribosyl)imidazole-4-carboxamide = 5-formamido-1-(5-phospho-D-ribosyl)imidazole-4-carboxamide + (6S)-5,6,7,8-tetrahydrofolate. It carries out the reaction IMP + H2O = 5-formamido-1-(5-phospho-D-ribosyl)imidazole-4-carboxamide. It functions in the pathway purine metabolism; IMP biosynthesis via de novo pathway; 5-formamido-1-(5-phospho-D-ribosyl)imidazole-4-carboxamide from 5-amino-1-(5-phospho-D-ribosyl)imidazole-4-carboxamide (10-formyl THF route): step 1/1. It participates in purine metabolism; IMP biosynthesis via de novo pathway; IMP from 5-formamido-1-(5-phospho-D-ribosyl)imidazole-4-carboxamide: step 1/1. The sequence is that of Bifunctional purine biosynthesis protein PurH from Wigglesworthia glossinidia brevipalpis.